A 450-amino-acid chain; its full sequence is Interferon regulatory factor 4 (450 aa).

A DNA-binding region (IRF tryptophan pentad repeat) is located at residues 21–129 (NGKLRQWLID…DPYKVYRIVP (109 aa)). Ser-446 and Ser-447 each carry phosphoserine; by ROCK2.

This sequence belongs to the IRF family. Interacts with SPIB and DEF6. Interacts with the BATF-JUNB heterodimer. Interacts with BATF (via bZIP domain); the interaction is direct. Directly interacts with NLRP3 in the nucleus of Th2 cells; this interaction enhances IRF4 ability to bind to the IL4 promoter and is required for optimal IRF4-dependent IL4 transcription. Interacts with SPI1. Post-translationally, phosphorylation by ROCK2 regulates IL-17 and IL-21 production. Lymphoid cells.

It is found in the nucleus. The protein resides in the cytoplasm. In terms of biological role, transcriptional activator. Binds to the interferon-stimulated response element (ISRE) of the MHC class I promoter. Binds the immunoglobulin lambda light chain enhancer, together with PU.1. Probably plays a role in ISRE-targeted signal transduction mechanisms specific to lymphoid cells. Involved in CD8(+) dendritic cell differentiation by forming a complex with the BATF-JUNB heterodimer in immune cells, leading to recognition of AICE sequence (5'-TGAnTCA/GAAA-3'), an immune-specific regulatory element, followed by cooperative binding of BATF and IRF4 and activation of genes. The sequence is that of Interferon regulatory factor 4 from Mus musculus (Mouse).